The chain runs to 533 residues: Kelch-like protein 33 (533 aa).

6 Kelch repeats span residues Ala210–Ala258, Glu273–Gly322, Lys323–Gly369, Leu371–Gly418, Arg419–Gly465, and Leu467–Leu514.

The chain is Kelch-like protein 33 (KLHL33) from Homo sapiens (Human).